Reading from the N-terminus, the 275-residue chain is Phosphonoacetaldehyde hydrolase (275 aa).

The active-site Nucleophile is the Asp-15. Residues Asp-15 and Ala-17 each contribute to the Mg(2+) site. Catalysis depends on Lys-56, which acts as the Schiff-base intermediate with substrate. Asp-189 lines the Mg(2+) pocket.

The protein belongs to the HAD-like hydrolase superfamily. PhnX family. As to quaternary structure, homodimer. Mg(2+) is required as a cofactor.

It catalyses the reaction phosphonoacetaldehyde + H2O = acetaldehyde + phosphate + H(+). Functionally, involved in phosphonate degradation. In Pseudomonas aeruginosa (strain UCBPP-PA14), this protein is Phosphonoacetaldehyde hydrolase.